A 103-amino-acid chain; its full sequence is MAVSQNIRIRLKAFDYRVLDASTQEIVNTAKRTGAQVRGPIPLPNKIEKFTVLRGPHVDKKSRDQWEIRTHKRLLDIVDPTPQTVDALMKLDLAAGVDVEIKV.

This sequence belongs to the universal ribosomal protein uS10 family. In terms of assembly, part of the 30S ribosomal subunit.

Involved in the binding of tRNA to the ribosomes. This chain is Small ribosomal subunit protein uS10, found in Jannaschia sp. (strain CCS1).